The primary structure comprises 566 residues: ATP-dependent RNA helicase DBP3 (566 aa).

The interval 1 to 139 (MSAGKKHARD…TTPNGSAQRN (139 aa)) is disordered. Positions 39–58 (DKKKKDKKDKKERKEKKEKK) are enriched in basic residues. The segment covering 81–91 (SEPKPEKEKKE) has biased composition (basic and acidic residues). The span at 92 to 102 (KNNKKDKKDKK) shows a compositional bias: basic residues. The segment covering 127–139 (AATTTPNGSAQRN) has biased composition (polar residues). Residues 182–209 (IHFSHLPTSTLTSKKPFASFTAPTPIQA) carry the Q motif motif. The 185-residue stretch at 212–396 (WPFALSGRDV…EGFMIDPVKA (185 aa)) folds into the Helicase ATP-binding domain. An ATP-binding site is contributed by 225–232 (AETGSGKT). The DEAD box motif lies at 342-345 (DEAD). Positions 433 to 566 (GKEQRLLELL…TEHDKSHSGS (134 aa)) constitute a Helicase C-terminal domain.

The protein belongs to the DEAD box helicase family. DDX5/DBP2 subfamily.

Its subcellular location is the nucleus. It localises to the nucleolus. The catalysed reaction is ATP + H2O = ADP + phosphate + H(+). Functionally, ATP-dependent RNA helicase required for 60S ribosomal subunit synthesis. Involved in efficient pre-rRNA processing, predominantly at site A3, which is necessary for the normal formation of 25S and 5.8S rRNAs. The polypeptide is ATP-dependent RNA helicase DBP3 (DBP3) (Chaetomium globosum (strain ATCC 6205 / CBS 148.51 / DSM 1962 / NBRC 6347 / NRRL 1970) (Soil fungus)).